The primary structure comprises 563 residues: Nigrin b (563 aa).

The signal sequence occupies residues 1-25 (MRVVAAAMLYFYIVVLAICSVGIQG). Residue glutamate 188 is part of the active site. An N-linked (GlcNAc...) asparagine glycan is attached at asparagine 221. Cystine bridges form between cysteine 274–cysteine 302, cysteine 319–cysteine 338, and cysteine 360–cysteine 377. 2 Ricin B-type lectin domains span residues 305 to 431 (RTSF…WTVT) and 434 to 559 (VKPI…WVTQ). The stretch at 316 to 356 (DGLCVDVRNGYDTDGTPLQLWPCGTQRNQRWTFDSDDTIRS) is one 1-alpha repeat. One copy of the 1-beta repeat lies at 357-397 (MGKCMTANGLNNGSNIVIFNCSTAAENAIKWEVPIDGSIIN). Asparagine 368 and asparagine 376 each carry an N-linked (GlcNAc...) asparagine glycan. The 1-gamma repeat unit spans residues 400–432 (SGLVMTAPRAASRTILLLEDNIYAASQGWTVTN). Residues 445–482 (KEMCLQSNGENNGVWMEDCEATSLQQQWALYGDRTIRV) form a 2-alpha repeat. Cysteines 448 and 463 form a disulfide. N-linked (GlcNAc...) asparagine glycosylation is present at asparagine 483. The 2-beta repeat unit spans residues 486 to 524 (RGLCVTTNGYNSKDLIIILKCQGLPSQRWFFNSDGAIVN). The cysteines at positions 489 and 506 are disulfide-linked. The stretch at 527–554 (SRHVMDVRASNVSLREIIIFPATGNPNQ) is one 2-gamma repeat. The N-linked (GlcNAc...) asparagine glycan is linked to asparagine 537.

It in the N-terminal section; belongs to the ribosome-inactivating protein family. Type 2 RIP subfamily. Disulfide-linked dimer of A and B chains.

It carries out the reaction Endohydrolysis of the N-glycosidic bond at one specific adenosine on the 28S rRNA.. Functionally, non-toxic type 2 RIP which strongly inhibits mammalian protein synthesis but does not affect plant nor bacterial protein synthesis. The A chain is responsible for inhibiting protein synthesis through the catalytic inactivation of 60S ribosomal subunits by removing adenine from position 4,324 of 28S rRNA. In terms of biological role, the B chain is a galactose-specific lectin that facilitates the binding of nigrin b to the cell membrane that precedes endocytosis. The sequence is that of Nigrin b from Sambucus nigra (European elder).